An 88-amino-acid chain; its full sequence is Small ribosomal subunit protein bS20 (88 aa).

Residues 1–28 are disordered; sequence MANIKSQIKRNRQNEKRRLRNKSVKSSL. The span at 7–23 shows a compositional bias: basic residues; the sequence is QIKRNRQNEKRRLRNKS.

This sequence belongs to the bacterial ribosomal protein bS20 family.

Its function is as follows. Binds directly to 16S ribosomal RNA. The sequence is that of Small ribosomal subunit protein bS20 from Salinispora tropica (strain ATCC BAA-916 / DSM 44818 / JCM 13857 / NBRC 105044 / CNB-440).